The sequence spans 269 residues: uncharacterized protein (269 aa).

The next 6 helical transmembrane spans lie at 21-43 (LNVW…ILFT), 48-70 (LFLI…FSLI), 121-143 (YLIL…VFTF), 147-166 (FIIA…FWII), 205-227 (SLEV…LFQF), and 242-264 (FVAF…YLLW).

Its subcellular location is the cell membrane. This is an uncharacterized protein from Aquifex aeolicus (strain VF5).